The chain runs to 250 residues: MKTKDAVAVVTGGASGLGLATTKRLLDAGAQVVVVDLRGDDVVGGLGDRARFAQADVTDEAAVSNALELADSLGPVRVVVNCAGTGNAIRVLSRDGVFPLAAFRKIVDINLVGTFNVLRLGAERIAKTEPIGEERGVIINTASVAAFDGQIGQAAYSASKGGVVGMTLPIARDLASKLIRVVTIAPGLFDTPLLASLPAEAKASLGQQVPHPSRLGNPDEYGALVLHIIENPMLNGEVIRLDGAIRMAPR.

Residues Ser-15, Leu-17, Asp-36, Asp-56, Val-57, and Cys-82 each contribute to the NAD(+) site. Ser-143 provides a ligand contact to substrate. NAD(+) contacts are provided by Tyr-156, Lys-160, Phe-189, and Thr-191. Tyr-156 serves as the catalytic Proton acceptor.

This sequence belongs to the short-chain dehydrogenases/reductases (SDR) family.

This is an uncharacterized protein from Mycobacterium tuberculosis (strain CDC 1551 / Oshkosh).